Here is a 355-residue protein sequence, read N- to C-terminus: Guanine nucleotide-binding protein G(i) subunit alpha (355 aa).

Gly-2 carries the N-myristoyl glycine lipid modification. Cys-3 is lipidated: S-palmitoyl cysteine. The G-alpha domain occupies 33–355; sequence REVKLLLLGA…KNNLKDCGLF (323 aa). The segment at 36–49 is G1 motif; that stretch reads KLLLLGAGESGKST. Residues 41–48, 176–182, 201–205, 270–273, and Ala-327 contribute to the GTP site; these read GAGESGKS, LRTRVKT, DVGGQ, and NKKD. 2 residues coordinate Mg(2+): Ser-48 and Thr-182. Residues 174-182 are G2 motif; it reads DVLRTRVKT. Positions 197-206 are G3 motif; sequence FKLFDVGGQR. The G4 motif stretch occupies residues 266–273; it reads ILFLNKKD. The tract at residues 325–330 is G5 motif; that stretch reads TCATDT.

Belongs to the G-alpha family. G(i/o/t/z) subfamily. G proteins are composed of 3 units; alpha, beta and gamma. The alpha chain contains the guanine nucleotide binding site.

Its function is as follows. Guanine nucleotide-binding proteins (G proteins) are involved as modulators or transducers in various transmembrane signaling systems. This is Guanine nucleotide-binding protein G(i) subunit alpha from Homarus americanus (American lobster).